Reading from the N-terminus, the 101-residue chain is Large ribosomal subunit protein uL24 (101 aa).

It belongs to the universal ribosomal protein uL24 family. In terms of assembly, part of the 50S ribosomal subunit.

One of two assembly initiator proteins, it binds directly to the 5'-end of the 23S rRNA, where it nucleates assembly of the 50S subunit. In terms of biological role, one of the proteins that surrounds the polypeptide exit tunnel on the outside of the subunit. The chain is Large ribosomal subunit protein uL24 from Borrelia garinii subsp. bavariensis (strain ATCC BAA-2496 / DSM 23469 / PBi) (Borreliella bavariensis).